Here is a 502-residue protein sequence, read N- to C-terminus: Maturase K (502 aa).

It belongs to the intron maturase 2 family. MatK subfamily.

The protein localises to the plastid. Its subcellular location is the chloroplast. Functionally, usually encoded in the trnK tRNA gene intron. Probably assists in splicing its own and other chloroplast group II introns. This Stanleya pinnata (Prince's plume) protein is Maturase K.